Consider the following 326-residue polypeptide: DNA-directed RNA polymerase subunit alpha (326 aa).

Residues 1 to 232 (MQGSARNFLK…EQLSSFVELE (232 aa)) are alpha N-terminal domain (alpha-NTD). The alpha C-terminal domain (alpha-CTD) stretch occupies residues 246-326 (FDPQLLAAVD…NWPPVDLMSE (81 aa)).

This sequence belongs to the RNA polymerase alpha chain family. Homodimer. The RNAP catalytic core consists of 2 alpha, 1 beta, 1 beta' and 1 omega subunit. When a sigma factor is associated with the core the holoenzyme is formed, which can initiate transcription.

It catalyses the reaction RNA(n) + a ribonucleoside 5'-triphosphate = RNA(n+1) + diphosphate. Functionally, DNA-dependent RNA polymerase catalyzes the transcription of DNA into RNA using the four ribonucleoside triphosphates as substrates. In Ruthia magnifica subsp. Calyptogena magnifica, this protein is DNA-directed RNA polymerase subunit alpha.